A 714-amino-acid polypeptide reads, in one-letter code: Probable serine/threonine-protein kinase mkcB (714 aa).

Basic residues predominate over residues 1–12; sequence MKSILKKAKHFF. 2 disordered regions span residues 1–267 and 281–349; these read MKSI…SSTS and GSGS…EQKP. Residues 23-35 show a composition bias toward basic and acidic residues; the sequence is GGEKTAKESESQQ. Residues 62 to 83 are compositionally biased toward low complexity; sequence SQSQPTTSALQTSTSLQPSSSL. The span at 84–94 shows a compositional bias: polar residues; sequence HQIPQSQSSLE. Composition is skewed to low complexity over residues 95–111 and 120–166; these read LTTN…TKQL and PHSQ…TLTT. Residues 167-177 show a composition bias toward polar residues; sequence PVPSSENLATL. 2 stretches are compositionally biased toward low complexity: residues 178–241 and 254–267; these read STST…QEQT and LSQS…SSTS. A compositionally biased stretch (polar residues) spans 282–294; that stretch reads SGSTKNKDSSSAP. Low complexity-rich tracts occupy residues 300-314 and 324-337; these read NNNN…KNRS and NNNN…KNNN. Positions 438-687 constitute a Protein kinase domain; sequence YKDSDQVGKG…AEELLKHPFI (250 aa). Residues 444-452 and lysine 467 contribute to the ATP site; that span reads VGKGGFGTV. Aspartate 558 (proton acceptor) is an active-site residue.

This sequence belongs to the protein kinase superfamily. STE Ser/Thr protein kinase family. STE20 subfamily. The cofactor is Mg(2+). In terms of tissue distribution, expressed at equal levels in prestalk and prespore cells.

It catalyses the reaction L-seryl-[protein] + ATP = O-phospho-L-seryl-[protein] + ADP + H(+). The enzyme catalyses L-threonyl-[protein] + ATP = O-phospho-L-threonyl-[protein] + ADP + H(+). This is Probable serine/threonine-protein kinase mkcB from Dictyostelium discoideum (Social amoeba).